The primary structure comprises 448 residues: Methylenetetrahydrofolate--tRNA-(uracil-5-)-methyltransferase TrmFO (448 aa).

13 to 18 is an FAD binding site; that stretch reads GAGLAG.

Belongs to the MnmG family. TrmFO subfamily. Requires FAD as cofactor.

It localises to the cytoplasm. The catalysed reaction is uridine(54) in tRNA + (6R)-5,10-methylene-5,6,7,8-tetrahydrofolate + NADH + H(+) = 5-methyluridine(54) in tRNA + (6S)-5,6,7,8-tetrahydrofolate + NAD(+). It carries out the reaction uridine(54) in tRNA + (6R)-5,10-methylene-5,6,7,8-tetrahydrofolate + NADPH + H(+) = 5-methyluridine(54) in tRNA + (6S)-5,6,7,8-tetrahydrofolate + NADP(+). Functionally, catalyzes the folate-dependent formation of 5-methyl-uridine at position 54 (M-5-U54) in all tRNAs. The protein is Methylenetetrahydrofolate--tRNA-(uracil-5-)-methyltransferase TrmFO of Streptococcus pyogenes serotype M12 (strain MGAS2096).